The chain runs to 427 residues: F-box protein At2g16450 (427 aa).

Positions 1-45 (MNPSPITIDLILEILSRLPAKSVRRFHCVSKRWASIFGSPYFKEL) constitute an F-box domain.

The chain is F-box protein At2g16450 from Arabidopsis thaliana (Mouse-ear cress).